A 444-amino-acid chain; its full sequence is NADH-quinone oxidoreductase subunit F (444 aa).

61-70 (GRGGAGFSTG) is an NAD(+) binding site. Residue 176–223 (GAGRYICGEETALINSLEGRRANPRSKPPFPAVFGLWGKPTCVNNVET) participates in FMN binding. Residues Cys353, Cys356, Cys359, and Cys400 each coordinate [4Fe-4S] cluster.

This sequence belongs to the complex I 51 kDa subunit family. Composed of 13 different subunits. Subunits NuoCD, E, F, and G constitute the peripheral sector of the complex. The cofactor is FMN. [4Fe-4S] cluster is required as a cofactor.

The enzyme catalyses a quinone + NADH + 5 H(+)(in) = a quinol + NAD(+) + 4 H(+)(out). Functionally, NDH-1 shuttles electrons from NADH, via FMN and iron-sulfur (Fe-S) centers, to quinones in the respiratory chain. Couples the redox reaction to proton translocation (for every two electrons transferred, four hydrogen ions are translocated across the cytoplasmic membrane), and thus conserves the redox energy in a proton gradient. This chain is NADH-quinone oxidoreductase subunit F (nuoF), found in Buchnera aphidicola subsp. Acyrthosiphon pisum (strain APS) (Acyrthosiphon pisum symbiotic bacterium).